The sequence spans 363 residues: D-xylulose reductase (363 aa).

Residues C41, H66, and E159 each coordinate Zn(2+). 183 to 188 is a binding site for NAD(+); it reads GAGPVG.

The protein belongs to the zinc-containing alcohol dehydrogenase family. Requires Zn(2+) as cofactor.

It carries out the reaction xylitol + NAD(+) = D-xylulose + NADH + H(+). It functions in the pathway carbohydrate degradation; L-arabinose degradation via L-arabinitol; D-xylulose 5-phosphate from L-arabinose (fungal route): step 4/5. The protein is D-xylulose reductase (XYL2) of Scheffersomyces stipitis (strain ATCC 58785 / CBS 6054 / NBRC 10063 / NRRL Y-11545) (Yeast).